The following is a 460-amino-acid chain: Nucleosome assembly protein 1-like 2 (460 aa).

Composition is skewed to basic and acidic residues over residues 1–11 (MAESENRKELS) and 27–36 (LGEHLERGED). Disordered regions lie at residues 1 to 88 (MAES…ADRP) and 214 to 238 (EEEEEEEEDDIEATGEENKEEEDPK). Residues 214–236 (EEEEEEEEDDIEATGEENKEEED) show a composition bias toward acidic residues. A Nuclear localization signal motif is present at residues 346–352 (IKKKQKH).

This sequence belongs to the nucleosome assembly protein (NAP) family.

The protein localises to the nucleus. In terms of biological role, acidic protein which may be involved in interactions with other proteins or DNA. The protein is Nucleosome assembly protein 1-like 2 (NAP1L2) of Homo sapiens (Human).